A 119-amino-acid polypeptide reads, in one-letter code: Large ribosomal subunit protein uL18 (119 aa).

This sequence belongs to the universal ribosomal protein uL18 family. In terms of assembly, part of the 50S ribosomal subunit; part of the 5S rRNA/L5/L18/L25 subcomplex. Contacts the 5S and 23S rRNAs.

In terms of biological role, this is one of the proteins that bind and probably mediate the attachment of the 5S RNA into the large ribosomal subunit, where it forms part of the central protuberance. The sequence is that of Large ribosomal subunit protein uL18 from Lactobacillus johnsonii (strain CNCM I-12250 / La1 / NCC 533).